The sequence spans 509 residues: NAD-dependent histone deacetylase SIR2 (509 aa).

The disordered stretch occupies residues 1-35; the sequence is MIISRGSHVDEEPVAKKPRISVGEMTDDTTDDGLN. Over residues 25–35 the composition is skewed to acidic residues; the sequence is MTDDTTDDGLN. The Deacetylase sirtuin-type domain maps to 185–476; sequence RLSNFYTIDH…TVVAQKCEWD (292 aa). NAD(+)-binding positions include 210-229 and 292-295; these read GAGV…EGFY and QNID. Histidine 312 functions as the Proton acceptor in the catalytic mechanism. Zn(2+) is bound by residues cysteine 320, cysteine 323, cysteine 344, and cysteine 347. Residues 420–422, 445–447, and cysteine 462 each bind NAD(+); these read GTS and NKD.

The protein belongs to the sirtuin family. Class I subfamily. Zn(2+) is required as a cofactor.

It localises to the nucleus. The enzyme catalyses N(6)-acetyl-L-lysyl-[protein] + NAD(+) + H2O = 2''-O-acetyl-ADP-D-ribose + nicotinamide + L-lysyl-[protein]. Functionally, NAD-dependent deacetylase. Heterochromatin component that silences transcription at silent mating loci, telomeres and the ribosomal DNA, and that also suppresses recombination in the rDNA and extends replicative life span. It acts as a NAD-dependent histone deacetylase, which deacetylates 'Lys-9' and 'Lys-14' of Histone H3 and 'Lys-16' of Histone H4. The chain is NAD-dependent histone deacetylase SIR2 (SIR2) from Candida glabrata (strain ATCC 2001 / BCRC 20586 / JCM 3761 / NBRC 0622 / NRRL Y-65 / CBS 138) (Yeast).